A 467-amino-acid polypeptide reads, in one-letter code: Glutamate--tRNA ligase (467 aa).

The short motif at 9 to 19 (PSPTGYLHIGG) is the 'HIGH' region element. The 'KMSKS' region motif lies at 237-241 (KLSKR). K240 contacts ATP.

This sequence belongs to the class-I aminoacyl-tRNA synthetase family. Glutamate--tRNA ligase type 1 subfamily. Monomer.

It localises to the cytoplasm. The enzyme catalyses tRNA(Glu) + L-glutamate + ATP = L-glutamyl-tRNA(Glu) + AMP + diphosphate. Its function is as follows. Catalyzes the attachment of glutamate to tRNA(Glu) in a two-step reaction: glutamate is first activated by ATP to form Glu-AMP and then transferred to the acceptor end of tRNA(Glu). This chain is Glutamate--tRNA ligase, found in Xanthomonas campestris pv. campestris (strain 8004).